A 176-amino-acid polypeptide reads, in one-letter code: COA8 family protein CG14806, mitochondrial (176 aa).

A mitochondrion-targeting transit peptide spans 1–23; the sequence is MNKCFRCQPRISLFQFSLPRCYA.

The protein belongs to the COA8 family.

The protein localises to the mitochondrion inner membrane. In terms of biological role, may be required for cytochrome c complex (COX) assembly and function, COX being the terminal component of the mitochondrial respiratory chain. Functionally, (Microbial infection) Required for optimal replication of E.chaffeensis. The sequence is that of COA8 family protein CG14806, mitochondrial from Drosophila melanogaster (Fruit fly).